Consider the following 135-residue polypeptide: ATP synthase epsilon chain (135 aa).

This sequence belongs to the ATPase epsilon chain family. As to quaternary structure, F-type ATPases have 2 components, CF(1) - the catalytic core - and CF(0) - the membrane proton channel. CF(1) has five subunits: alpha(3), beta(3), gamma(1), delta(1), epsilon(1). CF(0) has three main subunits: a, b and c.

The protein localises to the cell inner membrane. In terms of biological role, produces ATP from ADP in the presence of a proton gradient across the membrane. In Rhodopseudomonas palustris (strain BisB5), this protein is ATP synthase epsilon chain.